Here is a 340-residue protein sequence, read N- to C-terminus: MLNIQNYSASPHPGIVAERPQTPSASEHAEIAVVPSTTEHRGTDIISLSQAATKIQQAQQTLQSTPPISEENNDERTLARQQLTSSLNALAKSGVSLSAEQNENLRSTFSAPTSALFSASPMAQPRTTISDAEIWDMVSQNISAIGDSYLGVYENVVAVYTDFYQAFSDILSKMGGWLSPGKDGNTIKLNVDSLKSEISSLINKYTQINKNTILFPSQTGSGMTTATKAEAEQWIKELNLPDSCLKASGSGYVVLVDTGPLSKMVSDLNGIGSGSALELDNAKYQAWQSGFKAQEENLKTTLQTLTQKYSNANSLYDNLVKVLSSTISSSLETAKSFLQG.

Disordered stretches follow at residues 1–26 (MLNI…PSAS) and 57–76 (QAQQ…NDER). The stretch at 291–319 (FKAQEENLKTTLQTLTQKYSNANSLYDNL) forms a coiled coil.

The protein belongs to the invasin protein D family.

The protein localises to the secreted. Functionally, required for translocation of effector proteins via the type III secretion system SPI-1, which is essential for an efficient bacterial internalization. Probably acts by modulating the secretion of SipA, SipB, and SipC. In Salmonella typhi, this protein is Cell invasion protein SipD (sipD).